Reading from the N-terminus, the 410-residue chain is Arginine deiminase (410 aa).

The active-site Amidino-cysteine intermediate is Cys398.

It belongs to the arginine deiminase family. In terms of assembly, homodimer.

The protein localises to the cytoplasm. The catalysed reaction is L-arginine + H2O = L-citrulline + NH4(+). The protein operates within amino-acid degradation; L-arginine degradation via ADI pathway; carbamoyl phosphate from L-arginine: step 1/2. This is Arginine deiminase (arcA) from Mycoplasmopsis arginini (Mycoplasma arginini).